Reading from the N-terminus, the 356-residue chain is 3,4-dihydroxy-2-butanone 4-phosphate synthase (356 aa).

The DHBP synthase stretch occupies residues 1-211 (MNAILSDQKT…ISDIVEYRMM (211 aa)). D-ribulose 5-phosphate contacts are provided by residues 38 to 39 (RE), aspartate 43, 150 to 154 (RIGHT), and glutamate 174. Glutamate 39 serves as a coordination point for Mg(2+). Residue histidine 153 participates in Mg(2+) binding. Residues 212–356 (NESLIRVIAE…KSTNVNETVA (145 aa)) are GTP cyclohydrolase II-like.

In the N-terminal section; belongs to the DHBP synthase family. The protein in the C-terminal section; belongs to the GTP cyclohydrolase II family. The cofactor is Mg(2+). Mn(2+) serves as cofactor.

It carries out the reaction D-ribulose 5-phosphate = (2S)-2-hydroxy-3-oxobutyl phosphate + formate + H(+). It participates in cofactor biosynthesis; riboflavin biosynthesis; 2-hydroxy-3-oxobutyl phosphate from D-ribulose 5-phosphate: step 1/1. Functionally, catalyzes the conversion of D-ribulose 5-phosphate to formate and 3,4-dihydroxy-2-butanone 4-phosphate. This chain is 3,4-dihydroxy-2-butanone 4-phosphate synthase (ribB), found in Sulfurospirillum multivorans (Dehalospirillum multivorans).